The sequence spans 328 residues: Gonadotropin-releasing hormone receptor (328 aa).

Residues 1-38 (MANSASPEQNQNHCSASNSSIPLTQANLPTLTLSGKIR) are Extracellular-facing. N18 is a glycosylation site (N-linked (GlcNAc...) asparagine). Residues 39-59 (VTVTFFLFLLSTTFNASFLLK) traverse the membrane as a helical segment. Residues 60-84 (LHKWTQKKENGKKLSKMKVLLKHLT) are Cytoplasmic-facing. The helical transmembrane segment at 85 to 105 (LANLLETLIVMPLDGMWNITV) threads the bilayer. Over 106–115 (QWYAGELLCK) the chain is Extracellular. A disulfide bridge links C114 with C196. Residues 116–136 (VLSYLKLFSMYAPAFMMVVIS) traverse the membrane as a helical segment. The Cytoplasmic portion of the chain corresponds to 137–157 (LDRSLAITRPLAVKSNSKLGR). A helical membrane pass occupies residues 158-178 (SMIGLAWLLSSIFAGPQLYIF). Topologically, residues 179–208 (RMIHLADSSGQTEGFSQCVTHCSFPQWWHQ) are extracellular. The chain crosses the membrane as a helical span at residues 209–229 (AFYNFFTFSCLFIIPLLFMLI). Residues 230–271 (CNAKIIFTLTRVLHQDPHKLQLNQSKNNIPRARLRTLKMTVA) lie on the Cytoplasmic side of the membrane. Residues 272–292 (FATSFTVCWTPYYVLGIWYWF) traverse the membrane as a helical segment. The Extracellular segment spans residues 293–306 (DPEMLNRVSDPVNH). Residues 307–327 (FFFLFALLNPCFDPLIYGYFS) traverse the membrane as a helical segment. Residue L328 is a topological domain, cytoplasmic.

The protein belongs to the G-protein coupled receptor 1 family.

It is found in the cell membrane. Functionally, receptor for gonadotropin releasing hormone (GnRH) that mediates the action of GnRH to stimulate the secretion of the gonadotropic hormones luteinizing hormone (LH) and follicle-stimulating hormone (FSH). This receptor mediates its action by association with G-proteins that activate a phosphatidylinositol-calcium second messenger system. This Equus caballus (Horse) protein is Gonadotropin-releasing hormone receptor (GNRHR).